The primary structure comprises 278 residues: Undecaprenyl-diphosphatase (278 aa).

8 helical membrane passes run Tyr-3 to Ser-23, Val-42 to Phe-62, Phe-88 to Ile-108, Ile-112 to Tyr-132, Ile-152 to Ile-172, Leu-190 to Ser-210, Gly-225 to Leu-245, and Val-253 to Ile-273.

The protein belongs to the UppP family.

Its subcellular location is the cell membrane. It carries out the reaction di-trans,octa-cis-undecaprenyl diphosphate + H2O = di-trans,octa-cis-undecaprenyl phosphate + phosphate + H(+). In terms of biological role, catalyzes the dephosphorylation of undecaprenyl diphosphate (UPP). In Saccharolobus islandicus (strain M.14.25 / Kamchatka #1) (Sulfolobus islandicus), this protein is Undecaprenyl-diphosphatase.